We begin with the raw amino-acid sequence, 274 residues long: Diaminopimelate epimerase (274 aa).

Substrate-binding residues include Asn11, Gln44, and Asn64. Residue Cys73 is the Proton donor of the active site. Substrate-binding positions include 74–75, Asn157, Asn190, and 208–209; these read GN and ER. Residue Cys217 is the Proton acceptor of the active site. Residue 218–219 coordinates substrate; that stretch reads GS.

This sequence belongs to the diaminopimelate epimerase family. As to quaternary structure, homodimer.

It localises to the cytoplasm. It carries out the reaction (2S,6S)-2,6-diaminopimelate = meso-2,6-diaminopimelate. Its pathway is amino-acid biosynthesis; L-lysine biosynthesis via DAP pathway; DL-2,6-diaminopimelate from LL-2,6-diaminopimelate: step 1/1. Functionally, catalyzes the stereoinversion of LL-2,6-diaminopimelate (L,L-DAP) to meso-diaminopimelate (meso-DAP), a precursor of L-lysine and an essential component of the bacterial peptidoglycan. The sequence is that of Diaminopimelate epimerase from Erwinia tasmaniensis (strain DSM 17950 / CFBP 7177 / CIP 109463 / NCPPB 4357 / Et1/99).